The primary structure comprises 208 residues: Small ribosomal subunit protein uS4 (208 aa).

An S4 RNA-binding domain is found at 98–159 (RRLDNVVYRL…KSRNVAAISE (62 aa)).

It belongs to the universal ribosomal protein uS4 family. In terms of assembly, part of the 30S ribosomal subunit. Contacts protein S5. The interaction surface between S4 and S5 is involved in control of translational fidelity.

One of the primary rRNA binding proteins, it binds directly to 16S rRNA where it nucleates assembly of the body of the 30S subunit. Functionally, with S5 and S12 plays an important role in translational accuracy. This is Small ribosomal subunit protein uS4 from Trichlorobacter lovleyi (strain ATCC BAA-1151 / DSM 17278 / SZ) (Geobacter lovleyi).